Here is a 462-residue protein sequence, read N- to C-terminus: Elongation factor 1-alpha (462 aa).

Residue G2 is modified to Blocked amino end (Gly). Residues 5–242 form the tr-type G domain; it reads KIHINIVVIG…DAILPPSRPT (238 aa). The segment at 14-21 is G1; that stretch reads GHVDSGKS. 14–21 is a binding site for GTP; the sequence is GHVDSGKS. At K36 the chain carries N6,N6,N6-trimethyllysine. K55 bears the N6-methyllysine mark. The segment at 70–74 is G2; it reads GITID. At K79 the chain carries N6,N6,N6-trimethyllysine. The interval 91-94 is G3; sequence DAPG. GTP-binding positions include 91–95 and 153–156; these read DAPGH and NKMD. A G4 region spans residues 153-156; the sequence is NKMD. Residues 194–196 are G5; the sequence is SGW. An N6,N6,N6-trimethyllysine mark is found at K219 and K318. E374 is modified (5-glutamyl glycerylphosphorylethanolamine).

Belongs to the TRAFAC class translation factor GTPase superfamily. Classic translation factor GTPase family. EF-Tu/EF-1A subfamily. In terms of processing, the N-terminus is blocked.

It is found in the cytoplasm. In terms of biological role, this protein promotes the GTP-dependent binding of aminoacyl-tRNA to the A-site of ribosomes during protein biosynthesis. The polypeptide is Elongation factor 1-alpha (Artemia salina (Brine shrimp)).